An 850-amino-acid polypeptide reads, in one-letter code: Translation initiation factor IF-2 (850 aa).

Disordered regions lie at residues 50-72 and 92-267; these read LKSS…KTTS and FVQR…TGPV. The span at 96 to 135 shows a compositional bias: basic and acidic residues; it reads SPEEIQAEQKREQEERRAAENAAREKADADARQRNEEQAR. The span at 136–172 shows a compositional bias: low complexity; it reads RQAAQAPAAAPVAKAEPAPAAAAPAAPAVPDAPVSED. 2 stretches are compositionally biased toward basic and acidic residues: residues 173–210 and 234–243; these read AAAR…RGEA and TTDEESDGFR. Over residues 244–257 the composition is skewed to basic residues; the sequence is RGRGGKGKPKKRNQ. In terms of domain architecture, tr-type G spans 350-517; that stretch reads SRAPVVTVMG…AVLLQAEILE (168 aa). The interval 359 to 366 is G1; sequence GHVDHGKT. 359–366 lines the GTP pocket; it reads GHVDHGKT. The interval 384-388 is G2; the sequence is GITQH. Residues 405-408 are G3; the sequence is DTPG. GTP-binding positions include 405–409 and 459–462; these read DTPGH and NKID. Positions 459–462 are G4; that stretch reads NKID. The G5 stretch occupies residues 495–497; sequence SAK.

The protein belongs to the TRAFAC class translation factor GTPase superfamily. Classic translation factor GTPase family. IF-2 subfamily.

The protein localises to the cytoplasm. Its function is as follows. One of the essential components for the initiation of protein synthesis. Protects formylmethionyl-tRNA from spontaneous hydrolysis and promotes its binding to the 30S ribosomal subunits. Also involved in the hydrolysis of GTP during the formation of the 70S ribosomal complex. The chain is Translation initiation factor IF-2 from Pseudomonas entomophila (strain L48).